Here is a 174-residue protein sequence, read N- to C-terminus: Small ribosomal subunit protein uS12m (174 aa).

It belongs to the universal ribosomal protein uS12 family. In terms of assembly, component of the mitochondrial small ribosomal subunit (mt-SSU). Mature N.crassa 74S mitochondrial ribosomes consist of a small (37S) and a large (54S) subunit. The 37S small subunit contains a 16S ribosomal RNA (16S mt-rRNA) and 32 different proteins. The 54S large subunit contains a 23S rRNA (23S mt-rRNA) and 42 different proteins. uS12m forms part of the decoding center of the mt-SSU.

Its subcellular location is the mitochondrion. Functionally, component of the mitochondrial ribosome (mitoribosome), a dedicated translation machinery responsible for the synthesis of mitochondrial genome-encoded proteins, including at least some of the essential transmembrane subunits of the mitochondrial respiratory chain. The mitoribosomes are attached to the mitochondrial inner membrane and translation products are cotranslationally integrated into the membrane. This Neurospora crassa (strain ATCC 24698 / 74-OR23-1A / CBS 708.71 / DSM 1257 / FGSC 987) protein is Small ribosomal subunit protein uS12m (mrps12).